We begin with the raw amino-acid sequence, 313 residues long: ADP-L-glycero-D-manno-heptose-6-epimerase (313 aa).

NADP(+) is bound by residues 10–11, 31–32, Lys-38, Arg-53, 75–79, and Asn-92; these read MI, DN, and EGACS. Tyr-139 serves as the catalytic Proton acceptor. Lys-143 provides a ligand contact to NADP(+). Asn-174 is a binding site for substrate. Val-175 and Lys-183 together coordinate NADP(+). Lys-183 acts as the Proton acceptor in catalysis. Residues Ser-185, His-192, 206–209, Arg-214, and Tyr-277 contribute to the substrate site; that span reads FAGS.

Belongs to the NAD(P)-dependent epimerase/dehydratase family. HldD subfamily. Homopentamer. The cofactor is NADP(+).

The catalysed reaction is ADP-D-glycero-beta-D-manno-heptose = ADP-L-glycero-beta-D-manno-heptose. It functions in the pathway nucleotide-sugar biosynthesis; ADP-L-glycero-beta-D-manno-heptose biosynthesis; ADP-L-glycero-beta-D-manno-heptose from D-glycero-beta-D-manno-heptose 7-phosphate: step 4/4. Its pathway is bacterial outer membrane biogenesis; LPS core biosynthesis. In terms of biological role, catalyzes the interconversion between ADP-D-glycero-beta-D-manno-heptose and ADP-L-glycero-beta-D-manno-heptose via an epimerization at carbon 6 of the heptose. This Vibrio vulnificus (strain YJ016) protein is ADP-L-glycero-D-manno-heptose-6-epimerase.